Consider the following 445-residue polypeptide: Tubulin beta-2 chain (445 aa).

Residues glutamine 11, glutamate 69, serine 138, glycine 142, threonine 143, glycine 144, asparagine 204, and asparagine 226 each contribute to the GTP site. Glutamate 69 contributes to the Mg(2+) binding site. Residues 424–445 (QYQDATAEDEGEFDEDEEVEEA) are disordered. Residues 429–445 (TAEDEGEFDEDEEVEEA) are compositionally biased toward acidic residues.

Belongs to the tubulin family. As to quaternary structure, dimer of alpha and beta chains. A typical microtubule is a hollow water-filled tube with an outer diameter of 25 nm and an inner diameter of 15 nM. Alpha-beta heterodimers associate head-to-tail to form protofilaments running lengthwise along the microtubule wall with the beta-tubulin subunit facing the microtubule plus end conferring a structural polarity. Microtubules usually have 13 protofilaments but different protofilament numbers can be found in some organisms and specialized cells. The cofactor is Mg(2+).

The protein resides in the cytoplasm. The protein localises to the cytoskeleton. Tubulin is the major constituent of microtubules, a cylinder consisting of laterally associated linear protofilaments composed of alpha- and beta-tubulin heterodimers. Microtubules grow by the addition of GTP-tubulin dimers to the microtubule end, where a stabilizing cap forms. Below the cap, tubulin dimers are in GDP-bound state, owing to GTPase activity of alpha-tubulin. In Echinococcus multilocularis (Fox tapeworm), this protein is Tubulin beta-2 chain (TUB-2).